The primary structure comprises 688 residues: Coiled-coil domain-containing protein 157 (688 aa).

Residues 143 to 153 (ANQGETLTSKP) show a composition bias toward polar residues. Disordered regions lie at residues 143-162 (ANQGETLTSKPTAKGEPAGS), 168-189 (AQLVKPPSPVPGLPQACPERDS), 322-341 (QAARQRQAQEAEQHRAQWER), 366-385 (QQRESTQAVESKAQQLQAEA), and 592-688 (QGAE…ERPT). Residues 288 to 572 (KLVGLLRAQL…LSKIREVAQQ (285 aa)) adopt a coiled-coil conformation. The segment covering 369–382 (ESTQAVESKAQQLQ) has biased composition (polar residues). Low complexity predominate over residues 671–680 (SPSSGRASPA).

The protein is Coiled-coil domain-containing protein 157 (CCDC157) of Bos taurus (Bovine).